Consider the following 435-residue polypeptide: ATP-dependent protease ATPase subunit HslU (435 aa).

ATP contacts are provided by residues I18, 60-65, D248, E313, and R385; that span reads GVGKTE.

It belongs to the ClpX chaperone family. HslU subfamily. A double ring-shaped homohexamer of HslV is capped on each side by a ring-shaped HslU homohexamer. The assembly of the HslU/HslV complex is dependent on binding of ATP.

Its subcellular location is the cytoplasm. Functionally, ATPase subunit of a proteasome-like degradation complex; this subunit has chaperone activity. The binding of ATP and its subsequent hydrolysis by HslU are essential for unfolding of protein substrates subsequently hydrolyzed by HslV. HslU recognizes the N-terminal part of its protein substrates and unfolds these before they are guided to HslV for hydrolysis. This is ATP-dependent protease ATPase subunit HslU from Ruegeria pomeroyi (strain ATCC 700808 / DSM 15171 / DSS-3) (Silicibacter pomeroyi).